Reading from the N-terminus, the 155-residue chain is Cathelicidin-1 (155 aa).

An N-terminal signal peptide occupies residues 1 to 29 (METQRASLSLGRCSLWLLLLGLALPSASA). Glutamine 30 carries the pyrrolidone carboxylic acid modification. Residues 30 to 143 (QVLSYREAVL…KQPWAPPQAA (114 aa)) constitute a propeptide that is removed on maturation. Cystine bridges form between cysteine 85-cysteine 96, cysteine 107-cysteine 124, and cysteine 146-cysteine 154.

It belongs to the cathelicidin family.

It is found in the secreted. Functionally, potent microbicidal activity; active against S.aureus and E.coli. This Ovis aries (Sheep) protein is Cathelicidin-1 (CATHL1A).